We begin with the raw amino-acid sequence, 192 residues long: Ubiquitin-conjugating enzyme E2 1 (192 aa).

Residues 1–28 (MTTPSRRRLMRDFKKLQEDPPAGVSGAP) are disordered. A UBC core domain is found at 4-150 (PSRRRLMRDF…VQQIVEQSWL (147 aa)). Cysteine 88 (glycyl thioester intermediate) is an active-site residue. A disordered region spans residues 171 to 192 (AAPGANDADDDRMDEGASGSNA).

It belongs to the ubiquitin-conjugating enzyme family. As to quaternary structure, interacts with ubr-1 and rfp-1. Interacts with ubc-13.

The catalysed reaction is S-ubiquitinyl-[E1 ubiquitin-activating enzyme]-L-cysteine + [E2 ubiquitin-conjugating enzyme]-L-cysteine = [E1 ubiquitin-activating enzyme]-L-cysteine + S-ubiquitinyl-[E2 ubiquitin-conjugating enzyme]-L-cysteine.. The protein operates within protein modification; protein ubiquitination. Catalyzes the covalent attachment of ubiquitin to other proteins. The protein is Ubiquitin-conjugating enzyme E2 1 (ubc-1) of Caenorhabditis elegans.